Here is a 161-residue protein sequence, read N- to C-terminus: ATP synthase subunit b 1 (161 aa).

The chain crosses the membrane as a helical span at residues 6-26 (ETWVAIAFVILMVVFGYLGVF).

The protein belongs to the ATPase B chain family. In terms of assembly, F-type ATPases have 2 components, F(1) - the catalytic core - and F(0) - the membrane proton channel. F(1) has five subunits: alpha(3), beta(3), gamma(1), delta(1), epsilon(1). F(0) has three main subunits: a(1), b(2) and c(10-14). The alpha and beta chains form an alternating ring which encloses part of the gamma chain. F(1) is attached to F(0) by a central stalk formed by the gamma and epsilon chains, while a peripheral stalk is formed by the delta and b chains.

It is found in the cell inner membrane. F(1)F(0) ATP synthase produces ATP from ADP in the presence of a proton or sodium gradient. F-type ATPases consist of two structural domains, F(1) containing the extramembraneous catalytic core and F(0) containing the membrane proton channel, linked together by a central stalk and a peripheral stalk. During catalysis, ATP synthesis in the catalytic domain of F(1) is coupled via a rotary mechanism of the central stalk subunits to proton translocation. Functionally, component of the F(0) channel, it forms part of the peripheral stalk, linking F(1) to F(0). The polypeptide is ATP synthase subunit b 1 (Bradyrhizobium diazoefficiens (strain JCM 10833 / BCRC 13528 / IAM 13628 / NBRC 14792 / USDA 110)).